A 645-amino-acid polypeptide reads, in one-letter code: MSNMDFLPISKEDLKKRNIDVLDFIVVTGDAYVDHPSFGTAIIGRVLEREGFTVGIIAQPNWNNIEDFKKLGKPKYGFLVNSGNIDSMVNHYTASKKKRHDDFYSPGGKSGYRPDRAVIVYCNKIKEAFKDSPIIIGGIEASLRRFAHYDYWDNSVRRSILEDSSADLLIYGMGEKPIVQVSNLLRYGMKIDSIKNVRGTTYIEKDISSLKDYIEIPSFEEVSTNKKSYAEAYKIQYYEQDSIRGKTLVQKHKERYVVQNPPQPPLSQEEMDEVYALPYARTYHPMYEAEGGIPAIKEVKFSITSHRGCYGSCSFCALTFHQGRVIQNRSQDSILKEANMMTNMKDFKGYIHDVGGPTANFRHRACKVQEKHGTCKNKQCVFPKACKNLIVDHKEYLSLLRKIRKIPNVKKVFIRSGIRFDYLMYDKNDEFFKELCEHHISGQLKVAPEHISDKVLNLMGKPTRNVYDSFVKKYYDINKKIHKNQFLVPYLMSSHPGSDLKAAIELAQYIKKMGYTPEQVQDFYPTPGSLSTTMYYTGINPLTEEKVYVPKDQKEKRMQRALLQFSILDNYDLVKEALIKAHREDLIGNGPDCLIPYNKPYKKSHKKNNVKNNNNHYNKNNNYNKNKDVSKKNKKNSLSKHKKRK.

The Radical SAM core domain maps to 295–566 (AIKEVKFSIT…RMQRALLQFS (272 aa)). [4Fe-4S] cluster is bound by residues Cys309, Cys313, and Cys316. Residues 598–645 (NKPYKKSHKKNNVKNNNNHYNKNNNYNKNKDVSKKNKKNSLSKHKKRK) are disordered. The span at 600–609 (PYKKSHKKNN) shows a compositional bias: basic residues. The segment covering 610-624 (VKNNNNHYNKNNNYN) has biased composition (low complexity). Residues 632–645 (KNKKNSLSKHKKRK) show a composition bias toward basic residues.

It belongs to the UPF0313 family. Requires [4Fe-4S] cluster as cofactor.

The chain is UPF0313 protein CLK_3381 from Clostridium botulinum (strain Loch Maree / Type A3).